We begin with the raw amino-acid sequence, 202 residues long: Secreted RxLR effector protein 11 (202 aa).

Residues 1-23 form the signal peptide; the sequence is MRLNFTKLFAGAVALAWTTESMA. The RxLR-dEER signature appears at 49–61; it reads RRLRTINGADEER.

This sequence belongs to the RxLR effector family.

The protein resides in the secreted. It localises to the host cytoplasm. It is found in the host nucleus. Effector that acts as a broad suppressor of cell death to interrupt plant immunity. Inhibits cell death induced by cell death-inducing proteins, including the PAMP elicitor INF1 from P.infestans. The polypeptide is Secreted RxLR effector protein 11 (Plasmopara viticola (Downy mildew of grapevine)).